The following is a 331-amino-acid chain: UPF0194 membrane protein YbhG (331 aa).

The N-terminal stretch at 1–19 (MKKPVVIGLAIAAIVAVIA) is a signal peptide. Residues 107 to 208 (EEIAQAAAAV…LDLQDTTLIA (102 aa)) adopt a coiled-coil conformation.

This sequence belongs to the UPF0194 family.

It is found in the periplasm. The polypeptide is UPF0194 membrane protein YbhG (Salmonella paratyphi A (strain ATCC 9150 / SARB42)).